We begin with the raw amino-acid sequence, 417 residues long: Serine hydroxymethyltransferase 2 (417 aa).

Residues L121 and 125–127 (GHL) each bind (6S)-5,6,7,8-tetrahydrofolate. K230 is modified (N6-(pyridoxal phosphate)lysine). 355–357 (SPF) serves as a coordination point for (6S)-5,6,7,8-tetrahydrofolate.

The protein belongs to the SHMT family. Homodimer. It depends on pyridoxal 5'-phosphate as a cofactor.

It localises to the cytoplasm. It carries out the reaction (6R)-5,10-methylene-5,6,7,8-tetrahydrofolate + glycine + H2O = (6S)-5,6,7,8-tetrahydrofolate + L-serine. Its pathway is one-carbon metabolism; tetrahydrofolate interconversion. It functions in the pathway amino-acid biosynthesis; glycine biosynthesis; glycine from L-serine: step 1/1. Functionally, catalyzes the reversible interconversion of serine and glycine with tetrahydrofolate (THF) serving as the one-carbon carrier. This reaction serves as the major source of one-carbon groups required for the biosynthesis of purines, thymidylate, methionine, and other important biomolecules. Also exhibits THF-independent aldolase activity toward beta-hydroxyamino acids, producing glycine and aldehydes, via a retro-aldol mechanism. In Pseudomonas syringae pv. syringae (strain B728a), this protein is Serine hydroxymethyltransferase 2.